The following is a 448-amino-acid chain: Dual specificity mitogen-activated protein kinase kinase 5 (448 aa).

The tract at residues 18 to 25 (VIRIKIPN) is interaction with MAPK7. In terms of domain architecture, PB1 spans 18-109 (VIRIKIPNSG…EPLQIFPRAC (92 aa)). Residues 64 to 68 (DEDGD) are interaction with MAP3K2/MAP3K3. The segment at 116–144 (NIHGLKVNTRAGPSQHTSPVVSDSLPSNS) is disordered. Positions 117 to 131 (IHGLKVNTRAGPSQH) are interaction with MAPK7. The segment covering 126 to 144 (AGPSQHTSPVVSDSLPSNS) has biased composition (polar residues). In terms of domain architecture, Protein kinase spans 166–419 (IRYRDTLGHG…PEELMGHPFI (254 aa)). ATP is bound by residues 172-180 (LGHGNGGTV) and Lys195. The active-site Proton acceptor is Asp283. A Phosphoserine modification is found at Ser311. A Phosphothreonine modification is found at Thr315.

Belongs to the protein kinase superfamily. STE Ser/Thr protein kinase family. MAP kinase kinase subfamily. In terms of assembly, interacts with PARD6A, MAP3K3 and MAPK7. Forms a complex with SQSTM1 and PRKCZ or PRKCI. It depends on Mg(2+) as a cofactor. In terms of processing, activated by phosphorylation on Ser/Thr by MAP kinase kinase kinases. As to expression, expressed in the liver and brain (at protein level). In terms of tissue distribution, expressed in the liver, muscle, testes, lung, kidney, spleen, heart and brain (at protein level).

The protein localises to the cytoplasm. It localises to the cytosol. Its subcellular location is the membrane. The enzyme catalyses L-seryl-[protein] + ATP = O-phospho-L-seryl-[protein] + ADP + H(+). It catalyses the reaction L-threonyl-[protein] + ATP = O-phospho-L-threonyl-[protein] + ADP + H(+). The catalysed reaction is L-tyrosyl-[protein] + ATP = O-phospho-L-tyrosyl-[protein] + ADP + H(+). In terms of biological role, acts as a scaffold for the formation of a ternary MAP3K2/MAP3K3-MAP3K5-MAPK7 signaling complex. Activation of this pathway appears to play a critical role in protecting cells from stress-induced apoptosis, neuronal survival and cardiac development and angiogenesis. As part of the MAPK/ERK signaling pathway, acts as a negative regulator of apoptosis in cardiomyocytes via promotion of STUB1/CHIP-mediated ubiquitination and degradation of ICER-type isoforms of CREM. The chain is Dual specificity mitogen-activated protein kinase kinase 5 (Map2k5) from Rattus norvegicus (Rat).